A 132-amino-acid polypeptide reads, in one-letter code: Female-specific protein 800 (132 aa).

Its function is as follows. FS800 is likely to have some function in the production or maintenance of the schistosome egg. It may have a function unrelated to eggshell formation. The polypeptide is Female-specific protein 800 (Schistosoma mansoni (Blood fluke)).